Consider the following 848-residue polypeptide: Protein NETWORKED 2C (848 aa).

Residues 10–90 form the NAB domain; that stretch reads YSWWWASHVR…ERYDHISKEL (81 aa). Positions 108–141 are disordered; it reads FAMNEDDDDDAPVSPRHHKNKTSNKNVPKVPDLP. Coiled-coil stretches lie at residues 172–204, 241–278, 305–454, and 752–797; these read LSKT…SYEN, EAQI…SRKQ, SEKE…KATN, and AKFE…SEEF.

This sequence belongs to the NET family.

Its function is as follows. Plant-specific actin binding protein. May be part of a membrane-cytoskeletal adapter complex. This Arabidopsis thaliana (Mouse-ear cress) protein is Protein NETWORKED 2C.